A 255-amino-acid chain; its full sequence is Ribosomal RNA small subunit methyltransferase A (255 aa).

Residues Asn12, Leu14, Gly39, Glu60, Asp84, and Asn106 each contribute to the S-adenosyl-L-methionine site.

The protein belongs to the class I-like SAM-binding methyltransferase superfamily. rRNA adenine N(6)-methyltransferase family. RsmA subfamily.

It localises to the cytoplasm. It catalyses the reaction adenosine(1518)/adenosine(1519) in 16S rRNA + 4 S-adenosyl-L-methionine = N(6)-dimethyladenosine(1518)/N(6)-dimethyladenosine(1519) in 16S rRNA + 4 S-adenosyl-L-homocysteine + 4 H(+). In terms of biological role, specifically dimethylates two adjacent adenosines (A1518 and A1519) in the loop of a conserved hairpin near the 3'-end of 16S rRNA in the 30S particle. May play a critical role in biogenesis of 30S subunits. This Janthinobacterium sp. (strain Marseille) (Minibacterium massiliensis) protein is Ribosomal RNA small subunit methyltransferase A.